We begin with the raw amino-acid sequence, 199 residues long: Cytochrome c-type cyt cy (199 aa).

A helical transmembrane segment spans residues 7 to 27 (ITKIGVTLFAVALFYGFIYML). Positions 69 to 80 (AAETAEAAAPAE) are enriched in low complexity. The interval 69-93 (AAETAEAAAPAEPAAPPPPAYVEVD) is disordered. Heme c is bound by residues cysteine 112, cysteine 115, histidine 116, and methionine 148.

In terms of processing, binds 1 heme c group covalently per subunit.

Its subcellular location is the cell membrane. Functionally, electron transfer pathways that operates during photosynthesis. The sequence is that of Cytochrome c-type cyt cy (cycY) from Rhodobacter capsulatus (strain ATCC BAA-309 / NBRC 16581 / SB1003).